We begin with the raw amino-acid sequence, 107 residues long: Regulatory protein SoxS (107 aa).

The HTH araC/xylS-type domain occupies 8-106 (QTLIEWIDEH…DRTPSDYRHR (99 aa)). 2 consecutive DNA-binding regions (H-T-H motif) follow at residues 25–46 (DVVA…RTVT) and 73–96 (IFDI…RREF).

The protein localises to the cytoplasm. Transcriptional activator of the superoxide response regulon of E.coli that includes at least 10 genes such as sodA, nfo, zwf and micF. Binds the DNA sequence 5'-GCACN(7)CAA-3'. It also facilitates the subsequent binding of RNA polymerase to the micF and the nfo promoters. The polypeptide is Regulatory protein SoxS (soxS) (Salmonella typhimurium (strain LT2 / SGSC1412 / ATCC 700720)).